Here is a 31-residue protein sequence, read N- to C-terminus: Cyclotide vico-B (31 aa).

Residues 1–31 constitute a cross-link (cyclopeptide (Gly-Asn)); sequence GSIPCAESCVYIPCITGIAGCSCKNKVCYYN. Disulfide bonds link Cys-5-Cys-21, Cys-9-Cys-23, and Cys-14-Cys-28.

This sequence belongs to the cyclotide family. Bracelet subfamily. In terms of processing, this is a cyclic peptide.

Functionally, probably participates in a plant defense mechanism. This chain is Cyclotide vico-B, found in Viola cotyledon (Violeta).